A 120-amino-acid chain; its full sequence is Glycine cleavage system H protein (120 aa).

In terms of domain architecture, Lipoyl-binding spans 17–99; the sequence is VATVGITEHA…QGAAWFFKLK (83 aa). Lys-58 bears the N6-lipoyllysine mark.

It belongs to the GcvH family. As to quaternary structure, the glycine cleavage system is composed of four proteins: P, T, L and H. The cofactor is (R)-lipoate.

In terms of biological role, the glycine cleavage system catalyzes the degradation of glycine. The H protein shuttles the methylamine group of glycine from the P protein to the T protein. This chain is Glycine cleavage system H protein, found in Sinorhizobium medicae (strain WSM419) (Ensifer medicae).